A 237-amino-acid chain; its full sequence is UPF0280 protein Mpal_1292 (237 aa).

It belongs to the UPF0280 family.

The protein is UPF0280 protein Mpal_1292 of Methanosphaerula palustris (strain ATCC BAA-1556 / DSM 19958 / E1-9c).